The following is a 509-amino-acid chain: ATP synthase subunit alpha (509 aa).

Position 169–176 (169–176) interacts with ATP; the sequence is GDRQTGKT.

This sequence belongs to the ATPase alpha/beta chains family. F-type ATPases have 2 components, CF(1) - the catalytic core - and CF(0) - the membrane proton channel. CF(1) has five subunits: alpha(3), beta(3), gamma(1), delta(1), epsilon(1). CF(0) has three main subunits: a(1), b(2) and c(9-12). The alpha and beta chains form an alternating ring which encloses part of the gamma chain. CF(1) is attached to CF(0) by a central stalk formed by the gamma and epsilon chains, while a peripheral stalk is formed by the delta and b chains.

It localises to the cell inner membrane. The enzyme catalyses ATP + H2O + 4 H(+)(in) = ADP + phosphate + 5 H(+)(out). In terms of biological role, produces ATP from ADP in the presence of a proton gradient across the membrane. The alpha chain is a regulatory subunit. The protein is ATP synthase subunit alpha of Paramagnetospirillum magneticum (strain ATCC 700264 / AMB-1) (Magnetospirillum magneticum).